We begin with the raw amino-acid sequence, 57 residues long: uncharacterized protein (57 aa).

The tract at residues 1 to 57 (MPHYVVVKSPMRRRRSPRRRSPRVCYSPRRVACSPRRRSPRRRSPRRRSPRRSIVVY) is disordered. Positions 10–22 (PMRRRRSPRRRSP) are enriched in basic residues. The segment covering 23–34 (RVCYSPRRVACS) has biased composition (low complexity). Over residues 35 to 51 (PRRRSPRRRSPRRRSPR) the composition is skewed to basic residues.

This is an uncharacterized protein from Acheta domesticus (House cricket).